The primary structure comprises 433 residues: Phosphomethylpyrimidine synthase (433 aa).

Residues Asn-69, Met-98, Tyr-127, His-163, 185–187 (SRG), 226–229 (DACR), and Glu-265 contribute to the substrate site. Residue His-269 participates in Zn(2+) binding. Tyr-292 is a binding site for substrate. A Zn(2+)-binding site is contributed by His-333. Residues Cys-409, Cys-412, and Cys-416 each contribute to the [4Fe-4S] cluster site.

This sequence belongs to the ThiC family. [4Fe-4S] cluster is required as a cofactor.

The catalysed reaction is 5-amino-1-(5-phospho-beta-D-ribosyl)imidazole + S-adenosyl-L-methionine = 4-amino-2-methyl-5-(phosphooxymethyl)pyrimidine + CO + 5'-deoxyadenosine + formate + L-methionine + 3 H(+). It functions in the pathway cofactor biosynthesis; thiamine diphosphate biosynthesis. In terms of biological role, catalyzes the synthesis of the hydroxymethylpyrimidine phosphate (HMP-P) moiety of thiamine from aminoimidazole ribotide (AIR) in a radical S-adenosyl-L-methionine (SAM)-dependent reaction. The protein is Phosphomethylpyrimidine synthase of Clostridioides difficile (strain 630) (Peptoclostridium difficile).